We begin with the raw amino-acid sequence, 128 residues long: UPF0102 protein KPN78578_35270 (128 aa).

Positions 1 to 20 are disordered; it reads MAQVPAGKNRSGQLSKQTGD.

This sequence belongs to the UPF0102 family.

The sequence is that of UPF0102 protein KPN78578_35270 from Klebsiella pneumoniae subsp. pneumoniae (strain ATCC 700721 / MGH 78578).